Reading from the N-terminus, the 256-residue chain is METYVNKLHEGSTYTAAVQYNVLEKDDDPASLTIWVPMFQSSVPADLLIKELASINILVKQISTPKGPSLRVTINSRSAVLAQMPSNFIISANVSLDERSKLAYDVTTPCEIKACSLTCLKVKSMLTTVKDLTMKTFNPTHEIIALCEFENIMTSKRVIIPTYLRPISVKNKDLNSLENIATTEFKNAITNAKIIPYAGLVLVITVTDNKGAFKYIKPQSQFIVDLGAYLEKESIYYVTTNWKHTATRFSIKPLED.

The tract at residues 1–110 (METYVNKLHE…KLAYDVTTPC (110 aa)) is interaction with M2-1. A nuclear targeting and binding to host importin KPNB1 region spans residues 110-183 (CEIKACSLTC…LNSLENIATT (74 aa)). The Nuclear export signal motif lies at 194–206 (IIPYAGLVLVITV). A Phosphothreonine modification is found at Thr-205.

Belongs to the pneumovirinae M protein family. In terms of assembly, forms dimers. Forms higher-order oligomers. Interacts with glycoprotein G (via N-terminus). Interacts with protein M2-1; this interaction directs the matrix protein localization to cytoplasmic inclusions comprising viral proteins L, N, P, and M2-1 and mediates the matrix protein association with the nucleocapsid. Interacts with host KPNB1; this interaction mediates nuclear import of the matrix protein early during infection. Interacts with host AP3M1; this interaction plays an essential role in trafficking the matrix protein in host cells. Interacts with host CAV1; this interaction probably facilitates viral budding. Interacts with host CFL1; this interaction probably facilitates viral replication. Interacts with host ZNF502; this interaction probably facilitates viral release. In terms of processing, phosphorylation is important for oligomerization.

It localises to the virion. The protein localises to the host cytoplasm. Its subcellular location is the host nucleus. The protein resides in the host cell membrane. Plays a crucial role in virus assembly into filaments and budding. Early in infection, localizes in the nucleus where it inhibits host cell transcription through direct binding to host chromatin. Later in infection, traffics to the cytoplasm through the action of host CRM1 to associate with inclusion bodies, the site of viral transcription and replication. During virus assembly and budding, acts as a bridge between the nucleocapsid and the lipid bilayer. In Human respiratory syncytial virus B (strain B1), this protein is Matrix protein (M).